A 267-amino-acid chain; its full sequence is Orotidine 5'-phosphate decarboxylase (267 aa).

Residues D38, 60–62 (KTH), 92–101 (DRKFADIGNT), Y218, and R236 each bind substrate. The active-site Proton donor is K94.

It belongs to the OMP decarboxylase family.

It catalyses the reaction orotidine 5'-phosphate + H(+) = UMP + CO2. It participates in pyrimidine metabolism; UMP biosynthesis via de novo pathway; UMP from orotate: step 2/2. This Debaryomyces hansenii (strain ATCC 36239 / CBS 767 / BCRC 21394 / JCM 1990 / NBRC 0083 / IGC 2968) (Yeast) protein is Orotidine 5'-phosphate decarboxylase (URA3).